The chain runs to 130 residues: Small ribosomal subunit protein uS9 (130 aa).

Residues 104–130 (LTRDPRMKERKKYGLKKARRAPQFSKR) form a disordered region. Residues 111-130 (KERKKYGLKKARRAPQFSKR) are compositionally biased toward basic residues.

Belongs to the universal ribosomal protein uS9 family.

This Ruminiclostridium cellulolyticum (strain ATCC 35319 / DSM 5812 / JCM 6584 / H10) (Clostridium cellulolyticum) protein is Small ribosomal subunit protein uS9.